Here is a 585-residue protein sequence, read N- to C-terminus: 2-succinyl-5-enolpyruvyl-6-hydroxy-3-cyclohexene-1-carboxylate synthase (585 aa).

This sequence belongs to the TPP enzyme family. MenD subfamily. In terms of assembly, homodimer. The cofactor is Mg(2+). Mn(2+) serves as cofactor. It depends on thiamine diphosphate as a cofactor.

The catalysed reaction is isochorismate + 2-oxoglutarate + H(+) = 5-enolpyruvoyl-6-hydroxy-2-succinyl-cyclohex-3-ene-1-carboxylate + CO2. It functions in the pathway quinol/quinone metabolism; 1,4-dihydroxy-2-naphthoate biosynthesis; 1,4-dihydroxy-2-naphthoate from chorismate: step 2/7. Its pathway is cofactor biosynthesis; phylloquinone biosynthesis. Functionally, catalyzes the thiamine diphosphate-dependent decarboxylation of 2-oxoglutarate and the subsequent addition of the resulting succinic semialdehyde-thiamine pyrophosphate anion to isochorismate to yield 2-succinyl-5-enolpyruvyl-6-hydroxy-3-cyclohexene-1-carboxylate (SEPHCHC). The sequence is that of 2-succinyl-5-enolpyruvyl-6-hydroxy-3-cyclohexene-1-carboxylate synthase from Crocosphaera subtropica (strain ATCC 51142 / BH68) (Cyanothece sp. (strain ATCC 51142)).